Here is a 316-residue protein sequence, read N- to C-terminus: Pantothenate kinase (316 aa).

Residue 95–102 coordinates ATP; the sequence is GSVAVGKS.

It belongs to the prokaryotic pantothenate kinase family.

The protein resides in the cytoplasm. It catalyses the reaction (R)-pantothenate + ATP = (R)-4'-phosphopantothenate + ADP + H(+). It participates in cofactor biosynthesis; coenzyme A biosynthesis; CoA from (R)-pantothenate: step 1/5. In Shewanella baltica (strain OS223), this protein is Pantothenate kinase.